We begin with the raw amino-acid sequence, 408 residues long: Peptidase T (408 aa).

Histidine 78 contacts Zn(2+). Residue aspartate 80 is part of the active site. Position 140 (aspartate 140) interacts with Zn(2+). Glutamate 173 (proton acceptor) is an active-site residue. Zn(2+) is bound by residues glutamate 174, aspartate 196, and histidine 379.

It belongs to the peptidase M20B family. The cofactor is Zn(2+).

The protein resides in the cytoplasm. The enzyme catalyses Release of the N-terminal residue from a tripeptide.. In terms of biological role, cleaves the N-terminal amino acid of tripeptides. The chain is Peptidase T from Shigella boydii serotype 18 (strain CDC 3083-94 / BS512).